The primary structure comprises 385 residues: Elongation factor Ts, mitochondrial (385 aa).

Residues 1-50 (MAWSQSARKPMIGLLFRAQQHGARGYSYSAFQAHLSSSNVDQSATLLRRF) constitute a mitochondrion transit peptide.

It belongs to the EF-Ts family.

The protein resides in the mitochondrion. In terms of biological role, associates with the EF-Tu.GDP complex and induces the exchange of GDP to GTP. It remains bound to the aminoacyl-tRNA.EF-Tu.GTP complex up to the GTP hydrolysis stage on the ribosome. This Oryza sativa subsp. indica (Rice) protein is Elongation factor Ts, mitochondrial.